Reading from the N-terminus, the 584-residue chain is Pectinesterase 3 (584 aa).

Residues 1–50 (MTRIKEFFTKLSESSTNQNISNIPKKKKKLFLALFATLLVVAAVIGIVAG) form the signal peptide. Positions 51–266 (VNSRKNSGDN…LSTGDRRLLQ (216 aa)) are excised as a propeptide. N-linked (GlcNAc...) asparagine glycans are attached at residues N108, N129, and N226. The substrate site is built by T348 and Q378. D401 serves as the catalytic Proton donor. A disulfide bridge links C415 with C435. The active-site Nucleophile is D422. R490 and W492 together coordinate substrate.

This sequence in the N-terminal section; belongs to the PMEI family. In the C-terminal section; belongs to the pectinesterase family. As to expression, in the peel, expression is localized to the region of the flavedo close to the oil glands, and to the innermost layer of the albedo. In the lamella, expression is localized to the cell layers opposing the fruit tissue, and to the parenchyma surrounding the vascular tissue. In the fruit vesicles, expression is restricted to the peripheral cell layers and stalk cells. High levels of expression are detected in the core matrix.

It localises to the secreted. The protein resides in the cell wall. The catalysed reaction is [(1-&gt;4)-alpha-D-galacturonosyl methyl ester](n) + n H2O = [(1-&gt;4)-alpha-D-galacturonosyl](n) + n methanol + n H(+). It functions in the pathway glycan metabolism; pectin degradation; 2-dehydro-3-deoxy-D-gluconate from pectin: step 1/5. In terms of biological role, acts in the modification of cell walls via demethylesterification of cell wall pectin. This Citrus sinensis (Sweet orange) protein is Pectinesterase 3.